The sequence spans 164 residues: Terminase, small subunit (164 aa).

The interval 1-35 is helix-turn-helix (HTH); sequence MEGLDINKLLDISDLPGIDGEEIKVYEPLQLVEVK. The tract at residues 1–35 is interaction with gp17; the sequence is MEGLDINKLLDISDLPGIDGEEIKVYEPLQLVEVK. The segment at 36–114 is oligomerization; that stretch reads SNPQNRTPDL…KDMKDITSEQ (79 aa). The tract at residues 115-164 is interaction with gp17; that stretch reads VGTKGAVPTGQMNIQNATVFMGSPTELMDEIGDAYEAQEAREKVINGTTD.

Homooctamer. Interacts with the terminase large subunit gp17; the active complex is probably heterooligomeric.

The terminase small subunit binds to the packaging initiation site and regulates the ATPase activity of the terminase large subunit. The terminase lies at a unique vertex of the procapsid and is composed of two subunits, a small terminase subunit involved in viral DNA recognition (packaging 'pac' sequence), and a large terminase subunit possessing endonucleolytic and ATPase activities. Both terminase subunits heterooligomerize and are docked on the portal protein to form the packaging machine. The terminase large subunit exhibits endonuclease activity and cleaves the viral genome concatemer once the capsid is full (headful packaging). Once the capsid is packaged with the DNA, the terminase complex is substituted by neck proteins. This Enterobacteria phage T4 (Bacteriophage T4) protein is Terminase, small subunit (16).